Here is a 464-residue protein sequence, read N- to C-terminus: Argininosuccinate lyase (464 aa).

This sequence belongs to the lyase 1 family. Argininosuccinate lyase subfamily.

It is found in the cytoplasm. It catalyses the reaction 2-(N(omega)-L-arginino)succinate = fumarate + L-arginine. It functions in the pathway amino-acid biosynthesis; L-arginine biosynthesis; L-arginine from L-ornithine and carbamoyl phosphate: step 3/3. The sequence is that of Argininosuccinate lyase from Pseudomonas paraeruginosa (strain DSM 24068 / PA7) (Pseudomonas aeruginosa (strain PA7)).